The primary structure comprises 217 residues: MNQTLLSSFGTPFERVELALDALREGRGVMVLDDEDRENEGDMIFPAETMTVEQMALTIRHGSGIVCLCITEDRRKQLDLPMMVQNNTSAYGTGFTVTIEAAEGVTTGVSAADRVTTVRAAIADGAKPSDLNRPGHVFPLRAQAGGVLTRGGHTEATIDLMTLAGFKPAGVLCELTNDNGTMARAPECIAFAGQHNMAVVTIEDLVAYRLAHERKVS.

D-ribulose 5-phosphate-binding positions include 37–38 (RE), D42, 150–154 (RGGHT), and E174. E38 contributes to the Mg(2+) binding site. Residue H153 participates in Mg(2+) binding.

It belongs to the DHBP synthase family. In terms of assembly, homodimer. Mg(2+) is required as a cofactor. The cofactor is Mn(2+).

It catalyses the reaction D-ribulose 5-phosphate = (2S)-2-hydroxy-3-oxobutyl phosphate + formate + H(+). It participates in cofactor biosynthesis; riboflavin biosynthesis; 2-hydroxy-3-oxobutyl phosphate from D-ribulose 5-phosphate: step 1/1. Functionally, catalyzes the conversion of D-ribulose 5-phosphate to formate and 3,4-dihydroxy-2-butanone 4-phosphate. This Salmonella arizonae (strain ATCC BAA-731 / CDC346-86 / RSK2980) protein is 3,4-dihydroxy-2-butanone 4-phosphate synthase.